Reading from the N-terminus, the 175-residue chain is Alpha-crystallin B chain (175 aa).

An N-acetylmethionine modification is found at Met-1. A Phosphoserine modification is found at Ser-19. The O-linked (GlcNAc) serine glycan is linked to Ser-41. A phosphoserine mark is found at Ser-45 and Ser-59. One can recognise a sHSP domain in the interval 56–164 (RAPSWFDTGL…PERTIPITRE (109 aa)). Residue His-83 coordinates Zn(2+). Residue Lys-92 is modified to N6-acetyllysine; partial. His-104, Glu-106, His-111, and His-119 together coordinate Zn(2+). The disordered stretch occupies residues 146–175 (NGPRKQVSGPERTIPITREEKPAVTAAPKK). Lys-166 bears the N6-acetyllysine mark. Thr-170 is a glycosylation site (O-linked (GlcNAc) threonine).

It belongs to the small heat shock protein (HSP20) family. In terms of assembly, heteromer composed of three CRYAA and one CRYAB subunits. Aggregates with homologous proteins, including the small heat shock protein HSPB1, to form large heteromeric complexes. Inter-subunit bridging via zinc ions enhances stability, which is crucial as there is no protein turn over in the lens. Interacts with HSPBAP1 and TTN/titin. Interacts with TMEM109; in the cellular response to DNA damage. Interacts with DES; binds rapidly during early stages of DES filament assembly and a reduced binding seen in the later stages. Interacts with TMED10; the interaction mediates the translocation from the cytoplasm into the ERGIC (endoplasmic reticulum-Golgi intermediate compartment) and thereby secretion. Interacts with ATP6V1A and with MTOR, forming a ternary complex. As to expression, lens as well as other tissues. Expressed in myocardial tissue.

The protein resides in the cytoplasm. Its subcellular location is the nucleus. It localises to the secreted. It is found in the lysosome. Its function is as follows. May contribute to the transparency and refractive index of the lens. Has chaperone-like activity, preventing aggregation of various proteins under a wide range of stress conditions. In lens epithelial cells, stabilizes the ATP6V1A protein, preventing its degradation by the proteasome. This chain is Alpha-crystallin B chain, found in Homo sapiens (Human).